We begin with the raw amino-acid sequence, 348 residues long: Probable dual-specificity RNA methyltransferase RlmN (348 aa).

The Proton acceptor role is filled by glutamate 89. In terms of domain architecture, Radical SAM core spans 95–328 (HKNRNTVCVS…VTLRISYGSR (234 aa)). Cysteine 102 and cysteine 333 are oxidised to a cystine. The [4Fe-4S] cluster site is built by cysteine 109, cysteine 113, and cysteine 116. S-adenosyl-L-methionine is bound by residues 159-160 (GE), serine 191, 214-216 (SLH), and asparagine 290. The active-site S-methylcysteine intermediate is cysteine 333.

It belongs to the radical SAM superfamily. RlmN family. [4Fe-4S] cluster is required as a cofactor.

The protein resides in the cytoplasm. The catalysed reaction is adenosine(2503) in 23S rRNA + 2 reduced [2Fe-2S]-[ferredoxin] + 2 S-adenosyl-L-methionine = 2-methyladenosine(2503) in 23S rRNA + 5'-deoxyadenosine + L-methionine + 2 oxidized [2Fe-2S]-[ferredoxin] + S-adenosyl-L-homocysteine. It carries out the reaction adenosine(37) in tRNA + 2 reduced [2Fe-2S]-[ferredoxin] + 2 S-adenosyl-L-methionine = 2-methyladenosine(37) in tRNA + 5'-deoxyadenosine + L-methionine + 2 oxidized [2Fe-2S]-[ferredoxin] + S-adenosyl-L-homocysteine. In terms of biological role, specifically methylates position 2 of adenine 2503 in 23S rRNA and position 2 of adenine 37 in tRNAs. This Dictyoglomus thermophilum (strain ATCC 35947 / DSM 3960 / H-6-12) protein is Probable dual-specificity RNA methyltransferase RlmN.